We begin with the raw amino-acid sequence, 624 residues long: LEAF RUST 10 DISEASE-RESISTANCE LOCUS RECEPTOR-LIKE PROTEIN KINASE-like 2.2 (624 aa).

An N-terminal signal peptide occupies residues 1–30 (MDYLSSMGSQTARFCLILLFLFYYLPCALS). Residues 31-263 (QDDLWGCGTP…IPNTRSILIT (233 aa)) are Extracellular-facing. N-linked (GlcNAc...) asparagine glycosylation is found at asparagine 45, asparagine 75, asparagine 85, asparagine 95, asparagine 150, and asparagine 164. The chain crosses the membrane as a helical span at residues 264-284 (IGQVVGFHVFIIVVMIIAFLF). Residues 285–624 (WRRKKVNDLR…EEDSSIYSEV (340 aa)) lie on the Cytoplasmic side of the membrane. A Protein kinase domain is found at 317 to 599 (KSFTEVVGRG…SLDPPPKPLL (283 aa)). ATP-binding positions include 323-331 (VGRGGFGTV) and lysine 345. Aspartate 434 serves as the catalytic Proton acceptor. The segment at 587–624 (NLDSLDPPPKPLLHMPMQNNNAESSQPSEEDSSIYSEV) is disordered. The span at 603–624 (MQNNNAESSQPSEEDSSIYSEV) shows a compositional bias: polar residues.

The protein belongs to the protein kinase superfamily. Ser/Thr protein kinase family.

The protein localises to the membrane. It carries out the reaction L-seryl-[protein] + ATP = O-phospho-L-seryl-[protein] + ADP + H(+). The enzyme catalyses L-threonyl-[protein] + ATP = O-phospho-L-threonyl-[protein] + ADP + H(+). This is LEAF RUST 10 DISEASE-RESISTANCE LOCUS RECEPTOR-LIKE PROTEIN KINASE-like 2.2 from Arabidopsis thaliana (Mouse-ear cress).